We begin with the raw amino-acid sequence, 123 residues long: Small ribosomal subunit protein uS12 (123 aa).

Aspartate 89 is subject to 3-methylthioaspartic acid.

It belongs to the universal ribosomal protein uS12 family. Part of the 30S ribosomal subunit. Contacts proteins S8 and S17. May interact with IF1 in the 30S initiation complex.

Functionally, with S4 and S5 plays an important role in translational accuracy. In terms of biological role, interacts with and stabilizes bases of the 16S rRNA that are involved in tRNA selection in the A site and with the mRNA backbone. Located at the interface of the 30S and 50S subunits, it traverses the body of the 30S subunit contacting proteins on the other side and probably holding the rRNA structure together. The combined cluster of proteins S8, S12 and S17 appears to hold together the shoulder and platform of the 30S subunit. The sequence is that of Small ribosomal subunit protein uS12 from Rhizobium etli (strain ATCC 51251 / DSM 11541 / JCM 21823 / NBRC 15573 / CFN 42).